The sequence spans 317 residues: Taste receptor type 2 member 14 (317 aa).

Residues 1–7 (MGDVIKS) lie on the Extracellular side of the membrane. The helical transmembrane segment at 8–28 (IFTFVLIVEFIIGNLGNSFIA) threads the bilayer. At 29-55 (LVNCIDWVKGRKISSVDQILTALAISR) the chain is on the cytoplasmic side. Residues 56 to 76 (ISLVWLIFGSWCVSVFLPALF) form a helical membrane-spanning segment. The Extracellular segment spans residues 77-87 (ATEKMFRMLTN). Residues threonine 86 and tryptophan 89 each contribute to the cholesterol site. A helical transmembrane segment spans residues 88 to 108 (IWTVINHFSVWLATGLGTFYF). The Cytoplasmic portion of the chain corresponds to 109–129 (LKIANFSNSIFLYLKWRVKKV). The helical transmembrane segment at 130 to 150 (VLVLLLVTSVFLFLNIALINI) threads the bilayer. The Extracellular segment spans residues 151-184 (HINASINGYRRNKTCSSDSSNFTRFSSLIVLTST). 3 N-linked (GlcNAc...) asparagine glycosylation sites follow: asparagine 153, asparagine 162, and asparagine 171. Residue valine 180 participates in cholesterol binding. A helical membrane pass occupies residues 185-205 (VFIFIPFTLSLAMFLLLIFSL). Topologically, residues 206-232 (WKHRKKMQHXVKRSGDASTKAHRGVKS) are cytoplasmic. A helical membrane pass occupies residues 233 to 253 (VITFFLLYAIFCLSFFISVWT). At 254–261 (SERLEENL) the chain is on the extracellular side. A helical membrane pass occupies residues 262 to 282 (IILSQVMGMAYPSCHSCVLIL). Residues serine 265 and methionine 268 each coordinate cholesterol. The Cytoplasmic segment spans residues 283–317 (GNKKLRQASLSVLLWLRYMFKDGEPSGHKEFRESS).

The protein belongs to the G-protein coupled receptor T2R family. Core component of the TAS2R14-GNAI1 complex, consisting of TAS2R14, GNAI1, GNB1 and GNG2; within the complex interacts with GNAI1. Core component of the TAS2R14-GNAT3 complex, consisting of TAS2R14, GNAT3, GNB1 and GNG2; within the complex interacts with GNAT3. Core component of the TAS2R14-GNAS2 complex, consisting of TAS2R14, GNAS2, GNB1 and GNG2; within the complex interacts with GNAS2.

Its subcellular location is the membrane. The catalysed reaction is Ca(2+)(in) = Ca(2+)(out). It catalyses the reaction 3',5'-cyclic AMP(in) = 3',5'-cyclic AMP(out). Its activity is regulated as follows. Basal activity is enhanced by binding to bitter tastants, such as flufenamic acid and aristolochic acid. Regulated by cholesterol in a concentration-dependent manner. Functionally, gustducin-linked G-protein coupled receptor that plays a role in the perception of bitterness. The activity of this receptor stimulates GNAT3, activating the gustducin G-protein pathway. Likely plays a role in sensing the chemical composition of the gastrointestinal content and other extra-oral tissues via the inhibitory G-protein pathways. This chain is Taste receptor type 2 member 14 (TAS2R14), found in Gorilla gorilla gorilla (Western lowland gorilla).